A 534-amino-acid polypeptide reads, in one-letter code: Light-independent protochlorophyllide reductase subunit B (534 aa).

Asp36 is a [4Fe-4S] cluster binding site. The active-site Proton donor is the Asp274. 409–410 (GL) contributes to the substrate binding site. The disordered stretch occupies residues 426 to 446 (DEAGPSHHGGKAVPASAPRAD).

This sequence belongs to the ChlB/BchB/BchZ family. As to quaternary structure, protochlorophyllide reductase is composed of three subunits; BchL, BchN and BchB. Forms a heterotetramer of two BchB and two BchN subunits. It depends on [4Fe-4S] cluster as a cofactor.

The enzyme catalyses chlorophyllide a + oxidized 2[4Fe-4S]-[ferredoxin] + 2 ADP + 2 phosphate = protochlorophyllide a + reduced 2[4Fe-4S]-[ferredoxin] + 2 ATP + 2 H2O. Its pathway is porphyrin-containing compound metabolism; bacteriochlorophyll biosynthesis (light-independent). Functionally, component of the dark-operative protochlorophyllide reductase (DPOR) that uses Mg-ATP and reduced ferredoxin to reduce ring D of protochlorophyllide (Pchlide) to form chlorophyllide a (Chlide). This reaction is light-independent. The NB-protein (BchN-BchB) is the catalytic component of the complex. The sequence is that of Light-independent protochlorophyllide reductase subunit B from Cereibacter sphaeroides (strain ATCC 17023 / DSM 158 / JCM 6121 / CCUG 31486 / LMG 2827 / NBRC 12203 / NCIMB 8253 / ATH 2.4.1.) (Rhodobacter sphaeroides).